A 124-amino-acid polypeptide reads, in one-letter code: Small ribosomal subunit protein uS12 (124 aa).

Aspartate 89 carries the post-translational modification 3-methylthioaspartic acid.

Belongs to the universal ribosomal protein uS12 family. As to quaternary structure, part of the 30S ribosomal subunit. Contacts proteins S8 and S17. May interact with IF1 in the 30S initiation complex.

Its function is as follows. With S4 and S5 plays an important role in translational accuracy. In terms of biological role, interacts with and stabilizes bases of the 16S rRNA that are involved in tRNA selection in the A site and with the mRNA backbone. Located at the interface of the 30S and 50S subunits, it traverses the body of the 30S subunit contacting proteins on the other side and probably holding the rRNA structure together. The combined cluster of proteins S8, S12 and S17 appears to hold together the shoulder and platform of the 30S subunit. This is Small ribosomal subunit protein uS12 from Blochmanniella pennsylvanica (strain BPEN).